We begin with the raw amino-acid sequence, 624 residues long: MPGLPLTDHDAVNTGCEFDCQRSSDQMCCEHSVAQFSSDQQLNPEENLALYCKPLELYNFIRHRAIENPPYLQRCLLYKIRAKQKKRIQITISLPGSNNKELQAQNIFPLYVLFARPTSNVPIEGHSPIYRFSQARLLTSFNDSGNNDRAEATFVIPDLETLIATQAYGLTFILVSRGTKKNKGRTGQNLCENDCSEKHVDYSSLRKLAGKCFWGKIPITLLNSSLETCADLILGHIVESPISICMSPGYLEPTFLEHDNCLSFCSRKADAMVPYQLQVKVSAAEAGAKDILKSPYNSFSYSDVPPSLLLRIVRLRVGNVLFNYKNTQMSEVTEDFTCPFCLVRCGNFKGLECHMTSSHDLFHYEFWISEDYQAVNVTLKKDNMRTEFVAAEVDNSHRIFYYRSRFKKSRTEILPVARADAHIMESGSPEETQAESEDDVQEENENALIDDSKKLHGSNHSQSEFLAFGKSRKLSANRADPRNRLLLQKRQFIHSHKAQPMTFEEVLSDNDSEDEVDDDIADLEDRRMLDDFVDVTKDEKRIMHMWNSFIRKQSILADSHVPWACEAFSRHHGEELLENSALLWGWRMFMIKLWNHSLLSARTMDTCNRILDDIKNERSDPKKQ.

The segment at 338–359 (CPFCLVRCGNFKGLECHMTSSH) adopts a C2H2-type zinc-finger fold. The disordered stretch occupies residues 420–445 (DAHIMESGSPEETQAESEDDVQEENE). Over residues 432–445 (TQAESEDDVQEENE) the composition is skewed to acidic residues. The VEFS-box stretch occupies residues 474–609 (LSANRADPRN…SARTMDTCNR (136 aa)).

It belongs to the VEFS (VRN2-EMF2-FIS2-SU(Z)12) family. Component of the polycomb repressive complex 2 (PRC2), which methylates 'Lys-27' residues of histone H3 (H3K27me3), leading to transcriptional repression of the affected target gene. In terms of tissue distribution, widely expressed. Highly expressed in shoot apical meristem and inflorescence meristem. Expressed in roots, leaves and immature seeds.

Functionally, polycomb group (PcG) protein. PcG proteins act by forming multiprotein complexes, which are required to maintain the transcriptionally repressive state of homeotic genes throughout development. PcG proteins are not required to initiate repression, but to maintain it during later stages of development. They act via the methylation of histones, rendering chromatin heritably changed in its expressibility. The polypeptide is Polycomb group protein EMF2A (Oryza sativa subsp. japonica (Rice)).